Consider the following 1520-residue polypeptide: Putative lipoprotein AcfD homolog (1520 aa).

The signal sequence occupies residues 1-23; it reads MNKKFKYKKSLLAAILSATLLAG. 2 disordered regions span residues 22-107 and 226-247; these read AGCD…GATC and NAATDKAPSTHTSPVVPVTTPG. Cys-24 carries the N-palmitoyl cysteine lipid modification. The S-diacylglycerol cysteine moiety is linked to residue Cys-24. Positions 31–42 are enriched in low complexity; that stretch reads SSSDTPPVDSGT. Over residues 51-77 the composition is skewed to pro residues; it reads DPTPNPEPTPEPTPDPEPTPEPIPDPE. The segment covering 97–107 has biased composition (polar residues); sequence GGSQRVTGATC. Residues 234-247 show a composition bias toward low complexity; that stretch reads STHTSPVVPVTTPG. Residues 1081–1381 form the Peptidase M60 domain; sequence GNMQSTGLWA…MYAQLKEWAE (301 aa). Residues 1498-1520 form a disordered region; sequence DLPKPEQGPETINQVTEHKMSAE.

It to V.cholerae AcfD (VC_0845).

It localises to the cell inner membrane. Its function is as follows. Involved in a type II secretion system (T2SS, formerly general secretion pathway, GSP) for the export of folded proteins across the outer membrane. The protein is Putative lipoprotein AcfD homolog (yghJ) of Escherichia coli (strain K12).